Here is a 186-residue protein sequence, read N- to C-terminus: dCTP deaminase (186 aa).

107 to 112 (KSTYAR) contributes to the dCTP binding site. Residue Glu133 is the Proton donor/acceptor of the active site. Positions 152, 166, and 176 each coordinate dCTP.

The protein belongs to the dCTP deaminase family. In terms of assembly, homotrimer.

It carries out the reaction dCTP + H2O + H(+) = dUTP + NH4(+). Its pathway is pyrimidine metabolism; dUMP biosynthesis; dUMP from dCTP (dUTP route): step 1/2. Catalyzes the deamination of dCTP to dUTP. The chain is dCTP deaminase from Campylobacter jejuni subsp. doylei (strain ATCC BAA-1458 / RM4099 / 269.97).